Here is a 152-residue protein sequence, read N- to C-terminus: Bacchus (152 aa).

Over residues 29-41 (DLKAKAAAEDKAA) the composition is skewed to basic and acidic residues. Residues 29-152 (DLKAKAAAED…DDGSGSDDQA (124 aa)) form a disordered region. A compositionally biased stretch (low complexity) spans 42–51 (AADAAGDAAD). The segment covering 72–89 (ESVKGTKRPAEAKSAESK) has biased composition (basic and acidic residues). Positions 99–152 (GDSDEEEALEEIIEGDSEIESDEYDIPYDGEEDDIECDDDDDDNDDGSGSDDQA) are enriched in acidic residues.

As to expression, expressed in the brain.

The protein localises to the nucleus. Negatively regulates tyramine beta-hydroxylase tbh and thus the conversion of tyramine (TA) to octopamine (OA). In tyrosine decarboxylase 2 (Tdc2) neurons, acts in an amine-mediated signaling pathway to negatively regulate acute ethanol sensitivity probably via tbh-mediated depletion of TA. This is Bacchus from Drosophila melanogaster (Fruit fly).